We begin with the raw amino-acid sequence, 216 residues long: Octanoyltransferase (216 aa).

The BPL/LPL catalytic domain maps to K24–N212. Substrate contacts are provided by residues R69–H76, S140–G142, and G153–A155. C171 (acyl-thioester intermediate) is an active-site residue.

It belongs to the LipB family.

It localises to the cytoplasm. The catalysed reaction is octanoyl-[ACP] + L-lysyl-[protein] = N(6)-octanoyl-L-lysyl-[protein] + holo-[ACP] + H(+). The protein operates within protein modification; protein lipoylation via endogenous pathway; protein N(6)-(lipoyl)lysine from octanoyl-[acyl-carrier-protein]: step 1/2. In terms of biological role, catalyzes the transfer of endogenously produced octanoic acid from octanoyl-acyl-carrier-protein onto the lipoyl domains of lipoate-dependent enzymes. Lipoyl-ACP can also act as a substrate although octanoyl-ACP is likely to be the physiological substrate. This is Octanoyltransferase from Leptospira interrogans serogroup Icterohaemorrhagiae serovar copenhageni (strain Fiocruz L1-130).